A 610-amino-acid chain; its full sequence is Elongation factor 4 (610 aa).

The region spanning 14 to 196 (NRIRNFSIIA…ALVANIPPPK (183 aa)) is the tr-type G domain. GTP-binding positions include 26–31 (DHGKST) and 143–146 (NKID).

Belongs to the TRAFAC class translation factor GTPase superfamily. Classic translation factor GTPase family. LepA subfamily.

Its subcellular location is the cell inner membrane. It carries out the reaction GTP + H2O = GDP + phosphate + H(+). Functionally, required for accurate and efficient protein synthesis under certain stress conditions. May act as a fidelity factor of the translation reaction, by catalyzing a one-codon backward translocation of tRNAs on improperly translocated ribosomes. Back-translocation proceeds from a post-translocation (POST) complex to a pre-translocation (PRE) complex, thus giving elongation factor G a second chance to translocate the tRNAs correctly. Binds to ribosomes in a GTP-dependent manner. This Legionella pneumophila (strain Lens) protein is Elongation factor 4.